A 220-amino-acid chain; its full sequence is MGLVFRTATQAAALLLSLLGWVLSCLTNYLPHWKNLNLELNEMENWTMGLWKSCVIQEEVGRQCKDFDSFLALPAELQVSRVLMSLCNGLGLLGLLASGCGLDCLRLGETQEGLKKRLLTLGGTLLWTSGVMVLVPVSWVAHKTVREFWDETMPEIVPRWEFGEALFLGWFAGFCLVLGGCVLHCAACWSPAPAASSHYAVAGPRDHQQHLELKQANPEI.

At 1–10 (MGLVFRTATQ) the chain is on the cytoplasmic side. The helical transmembrane segment at 11-31 (AAALLLSLLGWVLSCLTNYLP) threads the bilayer. Topologically, residues 32–81 (HWKNLNLELNEMENWTMGLWKSCVIQEEVGRQCKDFDSFLALPAELQVSR) are extracellular. The helical transmembrane segment at 82-102 (VLMSLCNGLGLLGLLASGCGL) threads the bilayer. At 103–120 (DCLRLGETQEGLKKRLLT) the chain is on the cytoplasmic side. Residues 121 to 141 (LGGTLLWTSGVMVLVPVSWVA) traverse the membrane as a helical segment. Residues 142–164 (HKTVREFWDETMPEIVPRWEFGE) lie on the Extracellular side of the membrane. Residues 165–185 (ALFLGWFAGFCLVLGGCVLHC) traverse the membrane as a helical segment. At 186 to 220 (AACWSPAPAASSHYAVAGPRDHQQHLELKQANPEI) the chain is on the cytoplasmic side.

This sequence belongs to the claudin family.

It is found in the cell junction. The protein localises to the tight junction. The protein resides in the cell membrane. Its function is as follows. Plays a major role in tight junction-specific obliteration of the intercellular space, through calcium-independent cell-adhesion activity. The polypeptide is Claudin-22 (Cldn22) (Mus musculus (Mouse)).